The following is a 426-amino-acid chain: Gamma-glutamyl phosphate reductase (426 aa).

The protein belongs to the gamma-glutamyl phosphate reductase family.

It localises to the cytoplasm. The enzyme catalyses L-glutamate 5-semialdehyde + phosphate + NADP(+) = L-glutamyl 5-phosphate + NADPH + H(+). Its pathway is amino-acid biosynthesis; L-proline biosynthesis; L-glutamate 5-semialdehyde from L-glutamate: step 2/2. Catalyzes the NADPH-dependent reduction of L-glutamate 5-phosphate into L-glutamate 5-semialdehyde and phosphate. The product spontaneously undergoes cyclization to form 1-pyrroline-5-carboxylate. This chain is Gamma-glutamyl phosphate reductase, found in Cupriavidus taiwanensis (strain DSM 17343 / BCRC 17206 / CCUG 44338 / CIP 107171 / LMG 19424 / R1) (Ralstonia taiwanensis (strain LMG 19424)).